The chain runs to 163 residues: Transcription elongation factor GreB (163 aa).

It belongs to the GreA/GreB family. GreB subfamily.

In terms of biological role, necessary for efficient RNA polymerase transcription elongation past template-encoded arresting sites. The arresting sites in DNA have the property of trapping a certain fraction of elongating RNA polymerases that pass through, resulting in locked ternary complexes. Cleavage of the nascent transcript by cleavage factors such as GreA or GreB allows the resumption of elongation from the new 3'terminus. GreB releases sequences of up to 9 nucleotides in length. The protein is Transcription elongation factor GreB of Vibrio parahaemolyticus serotype O3:K6 (strain RIMD 2210633).